Consider the following 153-residue polypeptide: Small ribosomal subunit protein uS5 (153 aa).

The 64-residue stretch at 15-78 (FQEVVVNVGR…DDAFKNLIHV (64 aa)) folds into the S5 DRBM domain.

This sequence belongs to the universal ribosomal protein uS5 family. As to quaternary structure, part of the 30S ribosomal subunit. Contacts proteins S4 and S8.

Functionally, with S4 and S12 plays an important role in translational accuracy. In terms of biological role, located at the back of the 30S subunit body where it stabilizes the conformation of the head with respect to the body. This Helicobacter acinonychis (strain Sheeba) protein is Small ribosomal subunit protein uS5.